The sequence spans 178 residues: Nucleoplasmin-3 (178 aa).

Alanine 2 carries the N-acetylalanine modification. Phosphoserine is present on residues serine 13 and serine 16. Arginine 27 is modified (omega-N-methylarginine). Residues 141–178 (TMSNDVSEEESEEEEEDSDEEEVELCPILPAKKQGGRP) are disordered. Positions 146-164 (VSEEESEEEEEDSDEEEVE) are enriched in acidic residues. Serine 147, serine 151, and serine 158 each carry phosphoserine.

Belongs to the nucleoplasmin family. In terms of assembly, interacts with NPM (via N-terminus). Forms a pentamer with NPM at a ratio 4:1 (NPM3/NPM). Two pentamers form a decamer. Post-translationally, phosphorylated. In terms of tissue distribution, ubiquitous.

It is found in the nucleus. Its subcellular location is the nucleolus. Its function is as follows. Plays a role in the regulation of diverse cellular processes such as ribosome biogenesis, chromatin remodeling or protein chaperoning. Modulates the histone chaperone function and the RNA-binding activity of nucleolar phosphoprotein B23/NPM. Efficiently mediates chromatin remodeling when included in a pentamer containing NPM3 and NPM. The polypeptide is Nucleoplasmin-3 (NPM3) (Homo sapiens (Human)).